A 1408-amino-acid polypeptide reads, in one-letter code: DNA-directed RNA polymerase subunit beta'' (1408 aa).

It belongs to the RNA polymerase beta' chain family. RpoC2 subfamily. As to quaternary structure, in plastids the minimal PEP RNA polymerase catalytic core is composed of four subunits: alpha, beta, beta', and beta''. When a (nuclear-encoded) sigma factor is associated with the core the holoenzyme is formed, which can initiate transcription.

Its subcellular location is the plastid. The protein localises to the chloroplast. It carries out the reaction RNA(n) + a ribonucleoside 5'-triphosphate = RNA(n+1) + diphosphate. Functionally, DNA-dependent RNA polymerase catalyzes the transcription of DNA into RNA using the four ribonucleoside triphosphates as substrates. This Psilotum nudum (Whisk fern) protein is DNA-directed RNA polymerase subunit beta''.